The chain runs to 383 residues: S-adenosylmethionine synthase (383 aa).

An ATP-binding site is contributed by His-15. Residue Asp-17 coordinates Mg(2+). K(+) is bound at residue Glu-43. Glu-56 and Gln-99 together coordinate L-methionine. The tract at residues 99-109 (QSPDINQGVDR) is flexible loop. ATP-binding positions include 164-166 (DAK), 230-231 (RF), Asp-239, 245-246 (RK), Ala-262, and Lys-266. L-methionine is bound at residue Asp-239. Lys-270 provides a ligand contact to L-methionine.

This sequence belongs to the AdoMet synthase family. Homotetramer; dimer of dimers. It depends on Mg(2+) as a cofactor. Requires K(+) as cofactor.

It is found in the cytoplasm. It catalyses the reaction L-methionine + ATP + H2O = S-adenosyl-L-methionine + phosphate + diphosphate. Its pathway is amino-acid biosynthesis; S-adenosyl-L-methionine biosynthesis; S-adenosyl-L-methionine from L-methionine: step 1/1. In terms of biological role, catalyzes the formation of S-adenosylmethionine (AdoMet) from methionine and ATP. The overall synthetic reaction is composed of two sequential steps, AdoMet formation and the subsequent tripolyphosphate hydrolysis which occurs prior to release of AdoMet from the enzyme. This Pseudoalteromonas translucida (strain TAC 125) protein is S-adenosylmethionine synthase.